The primary structure comprises 104 residues: L-rhamnose mutarotase (104 aa).

Tyrosine 18 serves as a coordination point for substrate. Histidine 22 acts as the Proton donor in catalysis. Substrate contacts are provided by residues tyrosine 41 and 76–77; that span reads WW.

It belongs to the rhamnose mutarotase family. In terms of assembly, homodimer.

It is found in the cytoplasm. It catalyses the reaction alpha-L-rhamnose = beta-L-rhamnose. Its pathway is carbohydrate metabolism; L-rhamnose metabolism. Functionally, involved in the anomeric conversion of L-rhamnose. In Salmonella agona (strain SL483), this protein is L-rhamnose mutarotase.